The sequence spans 183 residues: NAD(P)H-quinone oxidoreductase subunit I, chloroplastic (183 aa).

2 consecutive 4Fe-4S ferredoxin-type domains span residues 55 to 84 (GRIHFEFDKCIACEVCVRVCPINLPVVDWE) and 95 to 124 (TSYSIDFGVCIFCGNCVEYCPTNCLSMTEE). Residues Cys-64, Cys-67, Cys-70, Cys-74, Cys-104, Cys-107, Cys-110, and Cys-114 each contribute to the [4Fe-4S] cluster site.

This sequence belongs to the complex I 23 kDa subunit family. As to quaternary structure, NDH is composed of at least 16 different subunits, 5 of which are encoded in the nucleus. It depends on [4Fe-4S] cluster as a cofactor.

It is found in the plastid. The protein resides in the chloroplast thylakoid membrane. It catalyses the reaction a plastoquinone + NADH + (n+1) H(+)(in) = a plastoquinol + NAD(+) + n H(+)(out). It carries out the reaction a plastoquinone + NADPH + (n+1) H(+)(in) = a plastoquinol + NADP(+) + n H(+)(out). In terms of biological role, NDH shuttles electrons from NAD(P)H:plastoquinone, via FMN and iron-sulfur (Fe-S) centers, to quinones in the photosynthetic chain and possibly in a chloroplast respiratory chain. The immediate electron acceptor for the enzyme in this species is believed to be plastoquinone. Couples the redox reaction to proton translocation, and thus conserves the redox energy in a proton gradient. This chain is NAD(P)H-quinone oxidoreductase subunit I, chloroplastic, found in Huperzia lucidula (Shining clubmoss).